Here is a 321-residue protein sequence, read N- to C-terminus: Olfactory receptor 3A2 (321 aa).

At 1–35 (MSLQKLMEPEAGTNRTAVAEFILLGLVQTEEMQPV) the chain is on the extracellular side. The N-linked (GlcNAc...) asparagine glycan is linked to Asn-14. The chain crosses the membrane as a helical span at residues 36 to 58 (VFVLLLFAYLVTTGGNLSILAAV). The Cytoplasmic segment spans residues 59 to 66 (LVEPKLHA). Residues 67-88 (PMYFFLGNLSVLDVGCITVTVP) traverse the membrane as a helical segment. Residues 89 to 109 (AMLGRLLSHKSTISYDACLSQ) are Extracellular-facing. The cysteines at positions 106 and 198 are disulfide-linked. Residues 110 to 129 (LFFFHLLAGMDCFLLTAMAY) form a helical membrane-spanning segment. The Cytoplasmic portion of the chain corresponds to 130–149 (DRLLAICQPLTYSTRMSQTV). The helical transmembrane segment at 150 to 167 (QRMLVAASLACAFTNALT) threads the bilayer. The Extracellular portion of the chain corresponds to 168–205 (HTVAMSTLNFCGPNEVNHFYCDLPQLFQLSCSSTQLNE). Residues 206–229 (LLLFAVGFIMAGTPLVLIITAYSH) form a helical membrane-spanning segment. Residues 230 to 246 (VAAAVLRIRSVEGRKKA) are Cytoplasmic-facing. Residues 247 to 270 (FSTCGSHLTVVCLFFGRGIFNYMR) form a helical membrane-spanning segment. Over 271–281 (LGSEEASDKDK) the chain is Extracellular. The helical transmembrane segment at 282-301 (GVGVFNTVINPMLNPLIYSL) threads the bilayer. Residues 302-321 (RNPDVQGALWQIFLGRRSLT) are Cytoplasmic-facing.

The protein belongs to the G-protein coupled receptor 1 family.

Its subcellular location is the cell membrane. Functionally, odorant receptor. This chain is Olfactory receptor 3A2 (OR3A2), found in Homo sapiens (Human).